Reading from the N-terminus, the 136-residue chain is Large ribosomal subunit protein uL16 (136 aa).

The protein belongs to the universal ribosomal protein uL16 family. In terms of assembly, part of the 50S ribosomal subunit.

In terms of biological role, binds 23S rRNA and is also seen to make contacts with the A and possibly P site tRNAs. The protein is Large ribosomal subunit protein uL16 of Mesomycoplasma hyopneumoniae (strain 232) (Mycoplasma hyopneumoniae).